The sequence spans 585 residues: Membrane protein insertase YidC (585 aa).

6 consecutive transmembrane segments (helical) span residues serine 5–proline 25, phenylalanine 338–tryptophan 358, phenylalanine 362–tyrosine 382, leucine 432–phenylalanine 452, isoleucine 482–leucine 502, and isoleucine 518–leucine 538.

This sequence belongs to the OXA1/ALB3/YidC family. Type 1 subfamily. As to quaternary structure, interacts with the Sec translocase complex via SecD. Specifically interacts with transmembrane segments of nascent integral membrane proteins during membrane integration.

Its subcellular location is the cell inner membrane. In terms of biological role, required for the insertion and/or proper folding and/or complex formation of integral membrane proteins into the membrane. Involved in integration of membrane proteins that insert both dependently and independently of the Sec translocase complex, as well as at least some lipoproteins. Aids folding of multispanning membrane proteins. This is Membrane protein insertase YidC from Chlorobium luteolum (strain DSM 273 / BCRC 81028 / 2530) (Pelodictyon luteolum).